The following is a 94-amino-acid chain: Large ribosomal subunit protein bL28 (94 aa).

The protein belongs to the bacterial ribosomal protein bL28 family.

This Hyphomonas neptunium (strain ATCC 15444) protein is Large ribosomal subunit protein bL28.